A 393-amino-acid polypeptide reads, in one-letter code: NAD(P)H-quinone oxidoreductase subunit H, chloroplastic (393 aa).

The protein belongs to the complex I 49 kDa subunit family. As to quaternary structure, NDH is composed of at least 16 different subunits, 5 of which are encoded in the nucleus.

The protein resides in the plastid. The protein localises to the chloroplast thylakoid membrane. The catalysed reaction is a plastoquinone + NADH + (n+1) H(+)(in) = a plastoquinol + NAD(+) + n H(+)(out). It carries out the reaction a plastoquinone + NADPH + (n+1) H(+)(in) = a plastoquinol + NADP(+) + n H(+)(out). In terms of biological role, NDH shuttles electrons from NAD(P)H:plastoquinone, via FMN and iron-sulfur (Fe-S) centers, to quinones in the photosynthetic chain and possibly in a chloroplast respiratory chain. The immediate electron acceptor for the enzyme in this species is believed to be plastoquinone. Couples the redox reaction to proton translocation, and thus conserves the redox energy in a proton gradient. In Lobularia maritima (Sweet alyssum), this protein is NAD(P)H-quinone oxidoreductase subunit H, chloroplastic.